The following is a 1083-amino-acid chain: UPF0182 protein BAD_0641 (1083 aa).

Residues 1–72 (MSFFDMFGPM…TSKPNRPRKP (72 aa)) form a disordered region. Helical transmembrane passes span 78–98 (IFIGVVLALAIVIGLFFALAQ), 125–145 (LWLAYAVLIAAVGFISATLAI), 178–198 (IAVVISLIVGLVFGSQFNANW), 239–259 (SLLLLAGIIFSIVTHVLMGGI), 281–301 (IGIWLMLNMFAWAANQVLGVF), 325–345 (VTFIMAAITAILGVILGLWIM), and 372–392 (VAIASAIVVSLVLTVAWPVLL). Residues 976-1061 (DSGASAGDAE…SDAAMKKGDW (86 aa)) are disordered. Composition is skewed to basic and acidic residues over residues 991–1013 (TDDKQDAKNDDSADGKTNTDGKQ) and 1050–1060 (KDSDAAMKKGD).

This sequence belongs to the UPF0182 family.

It localises to the cell membrane. The protein is UPF0182 protein BAD_0641 of Bifidobacterium adolescentis (strain ATCC 15703 / DSM 20083 / NCTC 11814 / E194a).